The primary structure comprises 120 residues: Large ribosomal subunit protein uL18 (120 aa).

A compositionally biased stretch (basic and acidic residues) spans 1–10 (MKLTRRESKE). The interval 1 to 26 (MKLTRRESKERRHRRVRGKVQGSPER) is disordered.

This sequence belongs to the universal ribosomal protein uL18 family. Part of the 50S ribosomal subunit; part of the 5S rRNA/L5/L18/L25 subcomplex. Contacts the 5S and 23S rRNAs.

This is one of the proteins that bind and probably mediate the attachment of the 5S RNA into the large ribosomal subunit, where it forms part of the central protuberance. The sequence is that of Large ribosomal subunit protein uL18 from Nostoc sp. (strain PCC 7120 / SAG 25.82 / UTEX 2576).